The chain runs to 450 residues: MELKGKRVLVVGLGESGLAMAKWLHRQGALVRVADSRDNPPNIDALQRVAPGAELVAGAFAEATFAGADFVALSPGVPKATPEIAALEIPLISEIELFADGVREQVPNSQIIAITGSNGKTTTTALTAHLLNGAGVPAIACGNISPSALDALMDAQDAGALPQVWVVELSSFQLETTHHLNAAAATVLNVSEDHLDRYEGSLANYAAAKSRVFQGKGVMVLNRDDDWSMANGRCGRKMVTFGLNAAPRGVDYGYADGAIWRGKDKLVAIDALKLSGLHNAANAMAALALCEAIGVDPLRLIEPLKGFSGLPHRVETVAEIGGVLYVDDSKGTNVGATLAAIEGMGRKVAIVLGGDGKGQDFSPLKPALEKHGRAVALIGRDAAAIGMALEGSGVPTRILGDMEAAVLWLAAQAQAGDCVLLSPACASLDMYRNYAHRAQAFIDAVEGLKS.

116-122 (GSNGKTT) lines the ATP pocket.

Belongs to the MurCDEF family.

The protein resides in the cytoplasm. It carries out the reaction UDP-N-acetyl-alpha-D-muramoyl-L-alanine + D-glutamate + ATP = UDP-N-acetyl-alpha-D-muramoyl-L-alanyl-D-glutamate + ADP + phosphate + H(+). It participates in cell wall biogenesis; peptidoglycan biosynthesis. Its function is as follows. Cell wall formation. Catalyzes the addition of glutamate to the nucleotide precursor UDP-N-acetylmuramoyl-L-alanine (UMA). The chain is UDP-N-acetylmuramoylalanine--D-glutamate ligase from Dechloromonas aromatica (strain RCB).